The following is an 88-amino-acid chain: Small ribosomal subunit protein bS20 (88 aa).

The span at 1–11 shows a compositional bias: basic and acidic residues; it reads MANIKSSEKDI. 2 disordered regions span residues 1 to 31 and 69 to 88; these read MANI…LRTQ and SKNA…SSAA.

Belongs to the bacterial ribosomal protein bS20 family.

Functionally, binds directly to 16S ribosomal RNA. This Leptospira interrogans serogroup Icterohaemorrhagiae serovar copenhageni (strain Fiocruz L1-130) protein is Small ribosomal subunit protein bS20.